The following is a 485-amino-acid chain: Benzaldehyde dehydrogenase YfmT (485 aa).

An NAD(+)-binding site is contributed by 231–236 (GSTKVG). Catalysis depends on residues Glu-253 and Cys-287.

Belongs to the aldehyde dehydrogenase family.

It carries out the reaction benzaldehyde + NAD(+) + H2O = benzoate + NADH + 2 H(+). It catalyses the reaction vanillin + NAD(+) + H2O = vanillate + NADH + 2 H(+). Its function is as follows. A benzaldehyde dehydrogenase able to act on substrates with 3- and 4-hydroxy and methoxy substitutions; converts vanillin (4-hydroxy-3-methoxybenzaldehyde) to vanillic acid in vitro. The physiological substrate is unknown. This is Benzaldehyde dehydrogenase YfmT (yfmT) from Bacillus subtilis (strain 168).